The chain runs to 633 residues: MGLCVNGAVPSEATKKDENLKRGNWGNQIEFVLTSVGYAVGLGNVWRFPYLCYRNGGGAFMFPYFIMLIFCGIPLFFMELSFGQFASQGCLGVWRVSPIFKGVGYGMMVVSTYIGIYYNVVICIAFYYFFASMNRVLPWTYCNNLWNTNNCAGVLSPNSSASFNLSSQQNLLNLTLGLNQTLKRTSPSEEYWRRHVLKISEDIGDFGEVQLPLLGCLGVSWLVVFLCLIRGVKSSGKVVYFTATFPYVVLTILFIRGITLEGAINGILYYLTPQWDKILHAMVWGDAASQIFYSLGCAWGGLITMASYNKFHNNCYRDSIIISITNCATSVYAGFVIFSILGFMATHLGVDVSEVADHGPGLAFVAYPEALTLLPISPLWSILFFFMLILLGLGTQFCLLETLVTAVVDEIGNDWIIRWKTLVTLGVAIIGFLLGIPLTTQAGIYWLLLMDNYAASFSLVIISCIMCIAVMYIYGHRKYFKDIEMMLGFPPPLFFQICWRFISPGIIFFILIFTVIQYRPIQYNDYLYPDWAITIGFLMALSSVICIPLYAIFKIWCSEGDTFLQRLKNAVKPSKDWGPALQEHRTGRYAQMSSTRSESNPEAQPLNPEKMKEDLSLTIQGSNGQAHTQDSKV.

Topologically, residues 1–30 (MGLCVNGAVPSEATKKDENLKRGNWGNQIE) are cytoplasmic. 3 consecutive transmembrane segments (helical) span residues 31-51 (FVLT…FPYL), 58-78 (GAFM…LFFM), and 113-133 (YIGI…FASM). Residues 134–208 (NRVLPWTYCN…ISEDIGDFGE (75 aa)) are Extracellular-facing. N-linked (GlcNAc...) asparagine glycans are attached at residues Asn158, Asn164, Asn173, and Asn179. The next 9 helical transmembrane spans lie at 209–229 (VQLP…LCLI), 238–258 (VVYF…IRGI), 283–303 (VWGD…GGLI), 330–350 (SVYA…HLGV), 373–393 (LLPI…LLGL), 429–449 (IIGF…WLLL), 453–473 (YAAS…VMYI), 493–513 (LFFQ…ILIF), and 533–553 (ITIG…YAIF). The Cytoplasmic portion of the chain corresponds to 554–633 (KIWCSEGDTF…GQAHTQDSKV (80 aa)). The disordered stretch occupies residues 588 to 633 (RYAQMSSTRSESNPEAQPLNPEKMKEDLSLTIQGSNGQAHTQDSKV). Polar residues-rich tracts occupy residues 591–602 (QMSSTRSESNPE) and 617–633 (LTIQ…DSKV).

This sequence belongs to the sodium:neurotransmitter symporter (SNF) (TC 2.A.22) family. SLC6A9 subfamily. As to expression, first expressed in early tailbud stage embryos in the midbrain and anterior spinal cord, and weakly in the hindbrain. By late tailbud stages, expression extends posteriorly in the spinal cord to appear in between somites. Expressed in the forebrain, retina, between the somites and in the blood islands by the swimming tadpole stages.

It localises to the cell membrane. It catalyses the reaction glycine(out) + chloride(out) + 2 Na(+)(out) = glycine(in) + chloride(in) + 2 Na(+)(in). In terms of biological role, sodium- and chloride-dependent glycine transporter which is essential for regulating glycine concentrations at inhibitory glycinergic synapses. This chain is Sodium- and chloride-dependent glycine transporter 1, found in Xenopus laevis (African clawed frog).